The primary structure comprises 187 residues: Large ribosomal subunit protein uL5 (187 aa).

This sequence belongs to the universal ribosomal protein uL5 family. Part of the 50S ribosomal subunit; part of the 5S rRNA/L5/L18/L25 subcomplex. Contacts the 5S rRNA and the P site tRNA. Forms a bridge to the 30S subunit in the 70S ribosome.

In terms of biological role, this is one of the proteins that bind and probably mediate the attachment of the 5S RNA into the large ribosomal subunit, where it forms part of the central protuberance. In the 70S ribosome it contacts protein S13 of the 30S subunit (bridge B1b), connecting the 2 subunits; this bridge is implicated in subunit movement. Contacts the P site tRNA; the 5S rRNA and some of its associated proteins might help stabilize positioning of ribosome-bound tRNAs. In Gluconobacter oxydans (strain 621H) (Gluconobacter suboxydans), this protein is Large ribosomal subunit protein uL5.